The following is a 445-amino-acid chain: Exodeoxyribonuclease 7 large subunit (445 aa).

This sequence belongs to the XseA family. Heterooligomer composed of large and small subunits.

It is found in the cytoplasm. The enzyme catalyses Exonucleolytic cleavage in either 5'- to 3'- or 3'- to 5'-direction to yield nucleoside 5'-phosphates.. Bidirectionally degrades single-stranded DNA into large acid-insoluble oligonucleotides, which are then degraded further into small acid-soluble oligonucleotides. The protein is Exodeoxyribonuclease 7 large subunit of Staphylococcus saprophyticus subsp. saprophyticus (strain ATCC 15305 / DSM 20229 / NCIMB 8711 / NCTC 7292 / S-41).